The following is a 170-amino-acid chain: Probable deoxyuridine 5'-triphosphate nucleotidohydrolase (170 aa).

It belongs to the dCTP deaminase family. Archaeal dUTPase subfamily.

It catalyses the reaction dUTP + H2O = dUMP + diphosphate + H(+). Its pathway is pyrimidine metabolism; dUMP biosynthesis; dUMP from dCTP (dUTP route): step 2/2. Functionally, this enzyme is involved in nucleotide metabolism: it produces dUMP, the immediate precursor of thymidine nucleotides and it decreases the intracellular concentration of dUTP so that uracil cannot be incorporated into DNA. This Methanococcoides burtonii (strain DSM 6242 / NBRC 107633 / OCM 468 / ACE-M) protein is Probable deoxyuridine 5'-triphosphate nucleotidohydrolase.